Reading from the N-terminus, the 235-residue chain is Phosphoribosylaminoimidazole-succinocarboxamide synthase (235 aa).

Belongs to the SAICAR synthetase family.

It carries out the reaction 5-amino-1-(5-phospho-D-ribosyl)imidazole-4-carboxylate + L-aspartate + ATP = (2S)-2-[5-amino-1-(5-phospho-beta-D-ribosyl)imidazole-4-carboxamido]succinate + ADP + phosphate + 2 H(+). Its pathway is purine metabolism; IMP biosynthesis via de novo pathway; 5-amino-1-(5-phospho-D-ribosyl)imidazole-4-carboxamide from 5-amino-1-(5-phospho-D-ribosyl)imidazole-4-carboxylate: step 1/2. The protein is Phosphoribosylaminoimidazole-succinocarboxamide synthase of Streptococcus pneumoniae (strain 70585).